We begin with the raw amino-acid sequence, 219 residues long: Deoxyribose-phosphate aldolase (219 aa).

Asp-93 functions as the Proton donor/acceptor in the catalytic mechanism. Lys-154 (schiff-base intermediate with acetaldehyde) is an active-site residue. The Proton donor/acceptor role is filled by Lys-179.

Belongs to the DeoC/FbaB aldolase family. DeoC type 1 subfamily.

The protein localises to the cytoplasm. The enzyme catalyses 2-deoxy-D-ribose 5-phosphate = D-glyceraldehyde 3-phosphate + acetaldehyde. The protein operates within carbohydrate degradation; 2-deoxy-D-ribose 1-phosphate degradation; D-glyceraldehyde 3-phosphate and acetaldehyde from 2-deoxy-alpha-D-ribose 1-phosphate: step 2/2. Functionally, catalyzes a reversible aldol reaction between acetaldehyde and D-glyceraldehyde 3-phosphate to generate 2-deoxy-D-ribose 5-phosphate. The sequence is that of Deoxyribose-phosphate aldolase from Haloquadratum walsbyi (strain DSM 16790 / HBSQ001).